The primary structure comprises 169 residues: Der GTPase-activating protein YihI (169 aa).

Disordered regions lie at residues 1-92 and 146-169; these read MKPS…EKPM and SYDDDEEEEEDEKQEDMMRLLRGN. Residues 10-19 show a composition bias toward basic residues; that stretch reads SKGHAKARRK. A compositionally biased stretch (basic and acidic residues) spans 20–30; sequence TREELDQEARD. Basic residues predominate over residues 31-40; it reads RKRQKKRRGH. The span at 49–58 shows a compositional bias: polar residues; that stretch reads GNTTSGSKGQ. Residues 147–159 show a composition bias toward acidic residues; that stretch reads YDDDEEEEEDEKQ. Residues 160-169 are compositionally biased toward basic and acidic residues; it reads EDMMRLLRGN.

It belongs to the YihI family. Interacts with Der.

In terms of biological role, a GTPase-activating protein (GAP) that modifies Der/EngA GTPase function. May play a role in ribosome biogenesis. This Escherichia coli O1:K1 / APEC protein is Der GTPase-activating protein YihI.